The sequence spans 465 residues: Sushi repeat-containing protein SRPX2 (465 aa).

The first 23 residues, 1 to 23, serve as a signal peptide directing secretion; the sequence is MAIQLTRRGALSLLLFLTPAVMP. Sushi domains lie at 69–119, 120–178, and 262–321; these read ATCY…YCRQ, MRCH…VCVD, and RRCP…VCVP. Cystine bridges form between C71–C105, C91–C117, C122–C163, and C149–C176. The HYR domain maps to 177-261; it reads VDIDPPKIRC…SCKFIVKVQV (85 aa). Intrachain disulfides connect C264/C306 and C292/C319.

In terms of assembly, forms homooligomers. Interacts with PLAUR (via the UPAR/Ly6 domains), ADAMTS4 and CTSB. Interacts with HGF; the interaction increases the mitogenic activity of HGF. Contains chondroitin sulfate chains.

The protein localises to the secreted. It localises to the cytoplasm. The protein resides in the cell surface. Its subcellular location is the synapse. In terms of biological role, acts as a ligand for the urokinase plasminogen activator surface receptor. Plays a role in angiogenesis by inducing endothelial cell migration and the formation of vascular network (cords). Involved in cellular migration and adhesion. Increases the phosphorylation levels of FAK. Interacts with and increases the mitogenic activity of HGF. Promotes synapse formation. This Bos taurus (Bovine) protein is Sushi repeat-containing protein SRPX2 (SRPX2).